The sequence spans 373 residues: UDP-N-acetylglucosamine--N-acetylmuramyl-(pentapeptide) pyrophosphoryl-undecaprenol N-acetylglucosamine transferase (373 aa).

UDP-N-acetyl-alpha-D-glucosamine-binding positions include 10–12 (TGG), Asn-124, Ser-195, and Gln-297.

Belongs to the glycosyltransferase 28 family. MurG subfamily.

Its subcellular location is the cell membrane. It carries out the reaction Mur2Ac(oyl-L-Ala-gamma-D-Glu-L-Lys-D-Ala-D-Ala)-di-trans,octa-cis-undecaprenyl diphosphate + UDP-N-acetyl-alpha-D-glucosamine = beta-D-GlcNAc-(1-&gt;4)-Mur2Ac(oyl-L-Ala-gamma-D-Glu-L-Lys-D-Ala-D-Ala)-di-trans,octa-cis-undecaprenyl diphosphate + UDP + H(+). The protein operates within cell wall biogenesis; peptidoglycan biosynthesis. Its function is as follows. Cell wall formation. Catalyzes the transfer of a GlcNAc subunit on undecaprenyl-pyrophosphoryl-MurNAc-pentapeptide (lipid intermediate I) to form undecaprenyl-pyrophosphoryl-MurNAc-(pentapeptide)GlcNAc (lipid intermediate II). This is UDP-N-acetylglucosamine--N-acetylmuramyl-(pentapeptide) pyrophosphoryl-undecaprenol N-acetylglucosamine transferase from Oenococcus oeni (strain ATCC BAA-331 / PSU-1).